Consider the following 201-residue polypeptide: Putative 3-methyladenine DNA glycosylase (201 aa).

Belongs to the DNA glycosylase MPG family.

This Trichodesmium erythraeum (strain IMS101) protein is Putative 3-methyladenine DNA glycosylase.